The primary structure comprises 266 residues: tRNA pseudouridine synthase A (266 aa).

The active-site Nucleophile is the Asp-51. Residue Tyr-106 participates in substrate binding.

This sequence belongs to the tRNA pseudouridine synthase TruA family.

The catalysed reaction is uridine(38/39/40) in tRNA = pseudouridine(38/39/40) in tRNA. In terms of biological role, formation of pseudouridine at positions 38, 39 and 40 in the anticodon stem and loop of transfer RNAs. In Pyrococcus furiosus (strain ATCC 43587 / DSM 3638 / JCM 8422 / Vc1), this protein is tRNA pseudouridine synthase A.